We begin with the raw amino-acid sequence, 576 residues long: Chaperonin CPN60-2, mitochondrial (576 aa).

Residues 1–34 constitute a mitochondrion transit peptide; that stretch reads MYRAAASLASKARQAGSSSAARQVGSRLAWSRNY.

Belongs to the chaperonin (HSP60) family.

The protein localises to the mitochondrion. Its function is as follows. Implicated in mitochondrial protein import and macromolecular assembly. May facilitate the correct folding of imported proteins. May also prevent misfolding and promote the refolding and proper assembly of unfolded polypeptides generated under stress conditions in the mitochondrial matrix. This chain is Chaperonin CPN60-2, mitochondrial (CPN60II), found in Zea mays (Maize).